Here is a 148-residue protein sequence, read N- to C-terminus: Large ribosomal subunit protein bL9 (148 aa).

It belongs to the bacterial ribosomal protein bL9 family.

Its function is as follows. Binds to the 23S rRNA. The sequence is that of Large ribosomal subunit protein bL9 from Streptomyces avermitilis (strain ATCC 31267 / DSM 46492 / JCM 5070 / NBRC 14893 / NCIMB 12804 / NRRL 8165 / MA-4680).